A 408-amino-acid chain; its full sequence is MLEVYLGVGMFTAIVLVLVLVILFAKSKLVASGDIIIGINGDADKAITTGAGGKLLSVLADNGIFVSSACGGGGSCGQCRVNIKSGGGDILPTELDHISKGEARGGCRLSCQVNVKSDMEIELDEEIFGIKKWECDVISNDNKATFIKELKLQIPDGESVPFRAGGYIQIEAPAHHVKYADFDVPAKYRGDWEHFGFFKLESKVDEETIRAYSMANYPEEFGIIMLNVRIATPPPRNLSLPCGKMSSYIWSLKAGDKVTISGPFGEFFAKDTDAEMVFIGGGAGMAPMRSHLFDQLKRLKSKRKMSFWYGARSKREMFYVEDFDGLAAENENFQWHVALSDPQAEDEWTGYTGFIHNVLYENYLRDHDAPEDCEFYMCGPPMMNAAVISMLKDLGVEDENILLDDFGG.

Residues 4–24 (VYLGVGMFTAIVLVLVLVILF) traverse the membrane as a helical segment. Residues 33 to 127 (GDIIIGINGD…DMEIELDEEI (95 aa)) enclose the 2Fe-2S ferredoxin-type domain. Cysteine 70, cysteine 76, cysteine 79, and cysteine 111 together coordinate [2Fe-2S] cluster. Residues 130–270 (IKKWECDVIS…SGPFGEFFAK (141 aa)) form the FAD-binding FR-type domain.

The protein belongs to the NqrF family. Composed of six subunits; NqrA, NqrB, NqrC, NqrD, NqrE and NqrF. [2Fe-2S] cluster is required as a cofactor. It depends on FAD as a cofactor.

It is found in the cell inner membrane. It catalyses the reaction a ubiquinone + n Na(+)(in) + NADH + H(+) = a ubiquinol + n Na(+)(out) + NAD(+). Its function is as follows. NQR complex catalyzes the reduction of ubiquinone-1 to ubiquinol by two successive reactions, coupled with the transport of Na(+) ions from the cytoplasm to the periplasm. The first step is catalyzed by NqrF, which accepts electrons from NADH and reduces ubiquinone-1 to ubisemiquinone by a one-electron transfer pathway. This chain is Na(+)-translocating NADH-quinone reductase subunit F, found in Shewanella denitrificans (strain OS217 / ATCC BAA-1090 / DSM 15013).